An 86-amino-acid polypeptide reads, in one-letter code: Sugar transporter SemiSWEET (86 aa).

3 consecutive transmembrane segments (helical) span residues proline 3 to proline 23, isoleucine 37 to leucine 57, and aspartate 61 to methionine 81. In terms of domain architecture, PQ-loop spans isoleucine 6 to proline 63.

Homodimer. Homooligomer.

Its subcellular location is the cell membrane. Mediates sucrose transmembrane transport down a concentration gradient. The chain is Sugar transporter SemiSWEET from Bradyrhizobium diazoefficiens (strain JCM 10833 / BCRC 13528 / IAM 13628 / NBRC 14792 / USDA 110).